The chain runs to 1405 residues: Rho guanine nucleotide exchange factor 18 (1405 aa).

Disordered regions lie at residues 1–47 (MGSE…EDGF), 92–115 (ETHR…ALPQ), and 289–330 (PGKS…PGKR). Basic and acidic residues-rich tracts occupy residues 92-103 (ETHRQEARRESS) and 308-330 (RQKE…PGKR). A C2H2-type; degenerate zinc finger spans residues 347-372 (SSCPLCGEPLLNSASLKEHPRTTLLS). Positions 485 to 682 (KRQDVLYELM…KDIISQVDAK (198 aa)) constitute a DH domain. The PH domain maps to 723-825 (QLHLEGALCW…WMAHIRRAVE (103 aa)). The interval 936 to 1016 (QVEEGSVSAG…PQAVEMPSTE (81 aa)) is disordered. Thr-952 is subject to Phosphothreonine. At Ser-961 the chain carries Phosphoserine. Residues 1084–1181 (FEKQREERAG…RERLELLRRF (98 aa)) adopt a coiled-coil conformation. Disordered regions lie at residues 1198-1242 (EAQP…VERP), 1274-1309 (RQTA…WESS), and 1328-1405 (ESAS…VIFF). Phosphoserine occurs at positions 1336 and 1338. Positions 1355–1365 (FPAPSPAPAAT) are enriched in pro residues. A compositionally biased stretch (low complexity) spans 1375 to 1394 (TSLPPVSPASSLPTTPLATT). The span at 1396–1405 (EVSKEDVIFF) shows a compositional bias: basic and acidic residues.

Interacts with SEPT9; interaction may inhibit GEF activity. Interacts with Gbetagamma subunits GNB1 and GNG2. Interacts with EPB41L4B. Interacts with PATJ (via C-terminus).

It is found in the cytoplasm. Its subcellular location is the cytoskeleton. It localises to the cell membrane. The protein localises to the apical cell membrane. Functionally, acts as a guanine nucleotide exchange factor (GEF) for RhoA GTPases. May play a role in actin cytoskeleton reorganization in different tissues since its activation induces formation of actin stress fibers. Also acts as a GEF for RAC1, inducing production of reactive oxygen species (ROS). Does not act as a GEF for CDC42. The G protein beta-gamma (Gbetagamma) subunits of heterotrimeric G proteins act as activators, explaining the integrated effects of LPA and other G-protein coupled receptor agonists on actin stress fiber formation, cell shape change and ROS production. Required for EPB41L4B-mediated regulation of the circumferential actomyosin belt in epithelial cells. This Mus musculus (Mouse) protein is Rho guanine nucleotide exchange factor 18 (Arhgef18).